Consider the following 711-residue polypeptide: GDNF-inducible zinc finger protein 1 (711 aa).

Residues 31-103 form the BTB domain; it reads CDVTVSVEYQ…VYTAKVQVEE (73 aa). Low complexity predominate over residues 153–168; sequence SGSQVSAAPAPRASVA. Disordered stretches follow at residues 153–220 and 243–312; these read SGSQ…PKIR and RLRE…EGEK. 3 stretches are compositionally biased toward basic and acidic residues: residues 197-212, 243-252, and 265-277; these read PPKK…KEVV, RLREQQKTAE, and SPDR…EQVS. Residues 298 to 309 show a composition bias toward acidic residues; it reads EEEEEEEEEDEE. 10 consecutive C2H2-type zinc fingers follow at residues 317–340, 348–371, 377–400, 407–429, 435–457, 463–485, 491–513, 519–541, 547–569, and 575–597; these read FKCS…KHRH, YRCD…RHVH, FPCE…LQVH, HRCG…ERTH, YGCT…MRIH, FVCD…KRCH, FMCE…NRIH, FKCE…IKVH, YCCD…RRIH, and FMCN…TSIH. A Phosphoserine modification is found at Ser-613.

Belongs to the krueppel C2H2-type zinc-finger protein family. As to quaternary structure, interacts with NCL. As to expression, expressed in adult brain, heart, skeletal muscle, kidney and liver. Also detected in fetal brain and kidney, and at lower levels in fetal lung and liver.

The protein resides in the cytoplasm. It localises to the nucleus. It is found in the nucleoplasm. The protein localises to the nucleolus. Transcriptional repressor that binds the GZF1 responsive element (GRE) (consensus: 5'-TGCGCN[TG][CA]TATA-3'). May be regulating VSX2/HOX10 expression. The protein is GDNF-inducible zinc finger protein 1 of Homo sapiens (Human).